Consider the following 602-residue polypeptide: Serine/threonine-protein phosphatase 2A 56 kDa regulatory subunit delta isoform (602 aa).

The segment covering 1 to 13 (MPYKLKKEKEPPK) has biased composition (basic and acidic residues). The disordered stretch occupies residues 1–96 (MPYKLKKEKE…QSSSRFNLSK (96 aa)). 5 repeat units span residues 37–38 (QP), 39–40 (QP), 41–42 (QP), 43–44 (QP), and 45–46 (QP). The tract at residues 37–52 (QPQPQPQPQPQAQSQP) is 8 X 2 AA approximate tandem repeats of Q-P. A compositionally biased stretch (low complexity) spans 46 to 55 (PQAQSQPPSS). One copy of the 6; approximate repeat lies at 47-48 (QA). Residues 49–50 (QS) form a 7; approximate repeat. Repeat unit 8 spans residues 51-52 (QP). T63 is subject to Phosphothreonine. 3 positions are modified to phosphoserine: S88, S89, and S90. An SH3-binding; class I motif is present at residues 523 to 530 (RAPPPLPP). The short motif at 548 to 565 (KRTVETEAVQMLKDIKKE) is the Nuclear localization signal element. Phosphoserine is present on residues S573 and S598.

The protein belongs to the phosphatase 2A regulatory subunit B56 family. PP2A consists of a common heterodimeric core enzyme, composed of a 36 kDa catalytic subunit (subunit C) and a 65 kDa constant regulatory subunit (PR65 or subunit A), that associates with a variety of regulatory subunits. Proteins that associate with the core dimer include three families of regulatory subunits B (the R2/B/PR55/B55, R3/B''/PR72/PR130/PR59 and R5/B'/B56 families), the 48 kDa variable regulatory subunit, viral proteins, and cell signaling molecules. Interacts with the PP2A A subunit PPP2R1A. Interacts with SGO1. Interacts with ADCY8. As to expression, isoform Delta-2 is widely expressed. Isoform Delta-1 is highly expressed in brain.

Its subcellular location is the cytoplasm. It localises to the nucleus. In terms of biological role, the B regulatory subunit might modulate substrate selectivity and catalytic activity, and might also direct the localization of the catalytic enzyme to a particular subcellular compartment. This Homo sapiens (Human) protein is Serine/threonine-protein phosphatase 2A 56 kDa regulatory subunit delta isoform (PPP2R5D).